A 191-amino-acid polypeptide reads, in one-letter code: Adenylate kinase (191 aa).

12–17 (GSGKTT) provides a ligand contact to ATP. Positions 34–63 (STGDLLRAESAKKTERGLLIEKFTSQGELV) are NMP. AMP is bound by residues threonine 35, arginine 40, 61–63 (ELV), 88–91 (GYPR), and glutamine 95. Positions 130-136 (GRSRGAD) are LID. Residue arginine 131 coordinates ATP. Arginine 133 and arginine 145 together coordinate AMP. Position 173 (arginine 173) interacts with ATP.

This sequence belongs to the adenylate kinase family. As to quaternary structure, monomer.

It is found in the cytoplasm. The catalysed reaction is AMP + ATP = 2 ADP. It participates in purine metabolism; AMP biosynthesis via salvage pathway; AMP from ADP: step 1/1. Catalyzes the reversible transfer of the terminal phosphate group between ATP and AMP. Plays an important role in cellular energy homeostasis and in adenine nucleotide metabolism. This chain is Adenylate kinase, found in Helicobacter pylori (strain G27).